The sequence spans 347 residues: Methylthioribose-1-phosphate isomerase (347 aa).

Substrate-binding positions include 45 to 47 (RGA), Arg88, and Gln197. Asp238 (proton donor) is an active-site residue. A substrate-binding site is contributed by 248–249 (NK).

It belongs to the eIF-2B alpha/beta/delta subunits family. MtnA subfamily.

The enzyme catalyses 5-(methylsulfanyl)-alpha-D-ribose 1-phosphate = 5-(methylsulfanyl)-D-ribulose 1-phosphate. It functions in the pathway amino-acid biosynthesis; L-methionine biosynthesis via salvage pathway; L-methionine from S-methyl-5-thio-alpha-D-ribose 1-phosphate: step 1/6. Catalyzes the interconversion of methylthioribose-1-phosphate (MTR-1-P) into methylthioribulose-1-phosphate (MTRu-1-P). This chain is Methylthioribose-1-phosphate isomerase, found in Trichormus variabilis (strain ATCC 29413 / PCC 7937) (Anabaena variabilis).